Here is a 184-residue protein sequence, read N- to C-terminus: ATP synthase subunit b, chloroplastic (184 aa).

Residues 27-49 (LATNPINLSVVLGVLIFFGKGVL) form a helical membrane-spanning segment.

The protein belongs to the ATPase B chain family. F-type ATPases have 2 components, F(1) - the catalytic core - and F(0) - the membrane proton channel. F(1) has five subunits: alpha(3), beta(3), gamma(1), delta(1), epsilon(1). F(0) has four main subunits: a(1), b(1), b'(1) and c(10-14). The alpha and beta chains form an alternating ring which encloses part of the gamma chain. F(1) is attached to F(0) by a central stalk formed by the gamma and epsilon chains, while a peripheral stalk is formed by the delta, b and b' chains.

It localises to the plastid. It is found in the chloroplast thylakoid membrane. F(1)F(0) ATP synthase produces ATP from ADP in the presence of a proton or sodium gradient. F-type ATPases consist of two structural domains, F(1) containing the extramembraneous catalytic core and F(0) containing the membrane proton channel, linked together by a central stalk and a peripheral stalk. During catalysis, ATP synthesis in the catalytic domain of F(1) is coupled via a rotary mechanism of the central stalk subunits to proton translocation. Its function is as follows. Component of the F(0) channel, it forms part of the peripheral stalk, linking F(1) to F(0). The polypeptide is ATP synthase subunit b, chloroplastic (Morus indica (Mulberry)).